Reading from the N-terminus, the 277-residue chain is Small ribosomal subunit protein uS2 (277 aa).

Basic and acidic residues-rich tracts occupy residues 227–256 and 267–277; these read QARAERQEAAAKEAAGDADKAPAEAERTEA and SEAKAEGNTEA. The segment at 227–277 is disordered; the sequence is QARAERQEAAAKEAAGDADKAPAEAERTEAPAEEAPAEAQSEAKAEGNTEA.

This sequence belongs to the universal ribosomal protein uS2 family.

This is Small ribosomal subunit protein uS2 from Corynebacterium jeikeium (strain K411).